A 277-amino-acid polypeptide reads, in one-letter code: Phosphatidylglycerol--prolipoprotein diacylglyceryl transferase (277 aa).

4 consecutive transmembrane segments (helical) span residues 22 to 42, 59 to 79, 107 to 127, and 133 to 153; these read ISIRYYGLLWAIGIFFAYIVV, LFFYCFFGILIGARLGHCLFY, GYEGLASHGGTLGLIISLWLY, and MNYMDVVDMIAVATPITACFI. Residue arginine 154 participates in a 1,2-diacyl-sn-glycero-3-phospho-(1'-sn-glycerol) binding. 3 helical membrane passes run 186–206, 216–236, and 251–271; these read PAQLYEAIAYFILFLVMMFLY, GFFFGLCLTAIFTFRFFVEFL, and MGQWLSIPFVIIGIYFMFFYG.

It belongs to the Lgt family.

It localises to the cell inner membrane. It catalyses the reaction L-cysteinyl-[prolipoprotein] + a 1,2-diacyl-sn-glycero-3-phospho-(1'-sn-glycerol) = an S-1,2-diacyl-sn-glyceryl-L-cysteinyl-[prolipoprotein] + sn-glycerol 1-phosphate + H(+). Its pathway is protein modification; lipoprotein biosynthesis (diacylglyceryl transfer). Catalyzes the transfer of the diacylglyceryl group from phosphatidylglycerol to the sulfhydryl group of the N-terminal cysteine of a prolipoprotein, the first step in the formation of mature lipoproteins. The sequence is that of Phosphatidylglycerol--prolipoprotein diacylglyceryl transferase from Bacteroides fragilis (strain ATCC 25285 / DSM 2151 / CCUG 4856 / JCM 11019 / LMG 10263 / NCTC 9343 / Onslow / VPI 2553 / EN-2).